The chain runs to 134 residues: uncharacterized protein (134 aa).

An N-terminal signal peptide occupies residues 1–37 (MSYIKRDHTALRDIAMKTFLKVVGLAASLSAASVAFS).

This is an uncharacterized protein from Coxiella burnetii (strain RSA 493 / Nine Mile phase I).